The primary structure comprises 132 residues: Vacuolar protein sorting-associated protein 55 homolog (132 aa).

4 consecutive transmembrane segments (helical) span residues 7–27, 32–52, 68–88, and 98–118; these read VAALAFAGVVGLTFLVLGCAL, TWTPMFVITFYVLSPVPLLIA, LALFITTGIVISAFALPIVLA, and CFLVNTGSVIMFGTIIAYFYL.

Belongs to the OB-RGRP/VPS55 family.

It localises to the endosome membrane. In terms of biological role, involved in endosomal protein transport. The sequence is that of Vacuolar protein sorting-associated protein 55 homolog from Caenorhabditis elegans.